The following is a 331-amino-acid chain: MARMYYDEDANLDLLAGKTIAIIGYGSQGHAHALNLKDSGLNVIVGLYPGSKSAEKAQAAGLTVKNVADAANIADFIMILLPDEVQKTVYKNEIEPNLQEGNTLAFAHGFNIHFGQVVPPANVDVVMVAPKGPGHLVRRTYEQGQGVPALFAVYQDASGKARDRALSYAKGIGGTRGGVLETTFREETETDLFGEQAVLCGGLSALIKAGFETLVEAGYQPELAYFECLHEVKLIVDLVVEGGLAKMRDSISNTAEYGDYTRGPRIVNEQTKAEMRKVLSEIQSGQFAREFVLENQSGKPGFTAMRRQEAEHPIEEVGKDLRAMFSWLKKV.

Positions 2-182 (ARMYYDEDAN…GGTRGGVLET (181 aa)) constitute a KARI N-terminal Rossmann domain. NADP(+)-binding positions include 25 to 28 (YGSQ), serine 51, serine 53, and 83 to 86 (DEVQ). Residue histidine 108 is part of the active site. Glycine 134 is a binding site for NADP(+). One can recognise a KARI C-terminal knotted domain in the interval 183–328 (TFREETETDL…KDLRAMFSWL (146 aa)). Mg(2+) contacts are provided by aspartate 191, glutamate 195, glutamate 227, and glutamate 231. Residue serine 252 participates in substrate binding.

Belongs to the ketol-acid reductoisomerase family. Mg(2+) serves as cofactor.

It catalyses the reaction (2R)-2,3-dihydroxy-3-methylbutanoate + NADP(+) = (2S)-2-acetolactate + NADPH + H(+). The catalysed reaction is (2R,3R)-2,3-dihydroxy-3-methylpentanoate + NADP(+) = (S)-2-ethyl-2-hydroxy-3-oxobutanoate + NADPH + H(+). It participates in amino-acid biosynthesis; L-isoleucine biosynthesis; L-isoleucine from 2-oxobutanoate: step 2/4. It functions in the pathway amino-acid biosynthesis; L-valine biosynthesis; L-valine from pyruvate: step 2/4. Involved in the biosynthesis of branched-chain amino acids (BCAA). Catalyzes an alkyl-migration followed by a ketol-acid reduction of (S)-2-acetolactate (S2AL) to yield (R)-2,3-dihydroxy-isovalerate. In the isomerase reaction, S2AL is rearranged via a Mg-dependent methyl migration to produce 3-hydroxy-3-methyl-2-ketobutyrate (HMKB). In the reductase reaction, this 2-ketoacid undergoes a metal-dependent reduction by NADPH to yield (R)-2,3-dihydroxy-isovalerate. This is Ketol-acid reductoisomerase (NADP(+)) from Nostoc sp. (strain PCC 7120 / SAG 25.82 / UTEX 2576).